The sequence spans 450 residues: Cysteine protease ATG4C (450 aa).

C112 serves as the catalytic Nucleophile. Active-site residues include D336 and H338.

This sequence belongs to the peptidase C54 family.

It is found in the cytoplasm. The catalysed reaction is [protein]-C-terminal L-amino acid-glycyl-phosphatidylethanolamide + H2O = [protein]-C-terminal L-amino acid-glycine + a 1,2-diacyl-sn-glycero-3-phosphoethanolamine. Cysteine protease that plays a key role in autophagy by mediating both proteolytic activation and delipidation of ATG8 family proteins. The protease activity is required for proteolytic activation of ATG8 family proteins: cleaves the C-terminal amino acid of ATG8 proteins to reveal a C-terminal glycine. Exposure of the glycine at the C-terminus is essential for ATG8 proteins conjugation to phosphatidylethanolamine (PE) and insertion to membranes, which is necessary for autophagy. In addition to the protease activity, also mediates delipidation of ATG8 family proteins. Catalyzes delipidation of PE-conjugated forms of ATG8 proteins during macroautophagy. In Xenopus laevis (African clawed frog), this protein is Cysteine protease ATG4C.